A 147-amino-acid chain; its full sequence is Globin, polymeric component P2 (147 aa).

A Globin domain is found at Pro-2–Glu-146. Heme b is bound at residue His-96.

Belongs to the globin family. As to quaternary structure, polymer.

The chain is Globin, polymeric component P2 from Glycera dibranchiata (Bloodworm).